The following is a 602-amino-acid chain: ATP-dependent lipid A-core flippase 1 (602 aa).

The next 5 helical transmembrane spans lie at 36–56 (LGFVAAIIGMLGYAAIDVYFL), 80–100 (LFIIVAFTVRGIAHFIANYCL), 154–174 (ILTIVQQSAFIIGLLGLMFYY), 176–196 (WQLSLIFLLITPIIAVIVSVV), and 261–281 (ASVPIIQVIASFALAFVFYAI). The ABC transmembrane type-1 domain occupies 39–321 (VAAIIGMLGY…LTNVNSEFQQ (283 aa)). One can recognise an ABC transporter domain in the interval 362-599 (YKNTNTMTTS…QGAYAQLHSF (238 aa)). 398–405 (GRSGSGKS) lines the ATP pocket.

It belongs to the ABC transporter superfamily. Lipid exporter (TC 3.A.1.106) family. In terms of assembly, homodimer.

It localises to the cell inner membrane. It carries out the reaction ATP + H2O + lipid A-core oligosaccharideSide 1 = ADP + phosphate + lipid A-core oligosaccharideSide 2.. Its function is as follows. Involved in lipopolysaccharide (LPS) biosynthesis. Translocates lipid A-core from the inner to the outer leaflet of the inner membrane. Transmembrane domains (TMD) form a pore in the inner membrane and the ATP-binding domain (NBD) is responsible for energy generation. This chain is ATP-dependent lipid A-core flippase 1, found in Colwellia psychrerythraea (strain 34H / ATCC BAA-681) (Vibrio psychroerythus).